The following is a 145-amino-acid chain: D-aminoacyl-tRNA deacylase (145 aa).

The Gly-cisPro motif, important for rejection of L-amino acids signature appears at 137 to 138 (GP).

It belongs to the DTD family. Homodimer.

Its subcellular location is the cytoplasm. The enzyme catalyses glycyl-tRNA(Ala) + H2O = tRNA(Ala) + glycine + H(+). The catalysed reaction is a D-aminoacyl-tRNA + H2O = a tRNA + a D-alpha-amino acid + H(+). Its function is as follows. An aminoacyl-tRNA editing enzyme that deacylates mischarged D-aminoacyl-tRNAs. Also deacylates mischarged glycyl-tRNA(Ala), protecting cells against glycine mischarging by AlaRS. Acts via tRNA-based rather than protein-based catalysis; rejects L-amino acids rather than detecting D-amino acids in the active site. By recycling D-aminoacyl-tRNA to D-amino acids and free tRNA molecules, this enzyme counteracts the toxicity associated with the formation of D-aminoacyl-tRNA entities in vivo and helps enforce protein L-homochirality. This is D-aminoacyl-tRNA deacylase from Pectobacterium atrosepticum (strain SCRI 1043 / ATCC BAA-672) (Erwinia carotovora subsp. atroseptica).